The following is a 439-amino-acid chain: Coiled-coil domain-containing protein 166 (439 aa).

Residues 1 to 28 (MAPKKKRGPSAGSQPGGAAAAGAEQPLS) form a disordered region. The span at 9 to 23 (PSAGSQPGGAAAAGA) shows a compositional bias: low complexity. Coiled coils occupy residues 27-74 (LSER…EENR) and 121-213 (DGVR…VRAL). The segment at 276 to 439 (PGGPPLWERP…AAAEASPGRA (164 aa)) is disordered. Residues 338–365 (VLSSMDSRVPSLATSKVGSRMPSLTASR) show a composition bias toward polar residues. 2 stretches are compositionally biased toward low complexity: residues 376–392 (SLEG…RVSS) and 428–439 (AEAAAEASPGRA).

The chain is Coiled-coil domain-containing protein 166 (CCDC166) from Homo sapiens (Human).